The chain runs to 503 residues: Probable cytosol aminopeptidase (503 aa).

Positions 274 and 279 each coordinate Mn(2+). The active site involves K286. 3 residues coordinate Mn(2+): D297, D356, and E358. R360 is a catalytic residue.

The protein belongs to the peptidase M17 family. Requires Mn(2+) as cofactor.

It is found in the cytoplasm. It catalyses the reaction Release of an N-terminal amino acid, Xaa-|-Yaa-, in which Xaa is preferably Leu, but may be other amino acids including Pro although not Arg or Lys, and Yaa may be Pro. Amino acid amides and methyl esters are also readily hydrolyzed, but rates on arylamides are exceedingly low.. The enzyme catalyses Release of an N-terminal amino acid, preferentially leucine, but not glutamic or aspartic acids.. Presumably involved in the processing and regular turnover of intracellular proteins. Catalyzes the removal of unsubstituted N-terminal amino acids from various peptides. This is Probable cytosol aminopeptidase from Burkholderia orbicola (strain MC0-3).